The primary structure comprises 185 residues: Ribosome-recycling factor (185 aa).

This sequence belongs to the RRF family.

It is found in the cytoplasm. In terms of biological role, responsible for the release of ribosomes from messenger RNA at the termination of protein biosynthesis. May increase the efficiency of translation by recycling ribosomes from one round of translation to another. The chain is Ribosome-recycling factor from Dichelobacter nodosus (strain VCS1703A).